The sequence spans 208 residues: TnpB-like protein MJ0012 (208 aa).

The Zn(2+) site is built by Cys-83, Cys-86, Cys-100, and Cys-103.

This sequence belongs to the transposase 35 family.

The polypeptide is TnpB-like protein MJ0012 (Methanocaldococcus jannaschii (strain ATCC 43067 / DSM 2661 / JAL-1 / JCM 10045 / NBRC 100440) (Methanococcus jannaschii)).